A 517-amino-acid polypeptide reads, in one-letter code: GMP synthase [glutamine-hydrolyzing] (517 aa).

Residues 11–202 (KIIVLDFGSQ…AFDVCEAKAN (192 aa)) enclose the Glutamine amidotransferase type-1 domain. Cysteine 88 serves as the catalytic Nucleophile. Catalysis depends on residues histidine 176 and glutamate 178. Residues 203–392 (WSMNDFIDMQ…LGMPEDLVWR (190 aa)) enclose the GMPS ATP-PPase domain. 230 to 236 (SGGVDSS) contributes to the ATP binding site.

In terms of assembly, homodimer.

The enzyme catalyses XMP + L-glutamine + ATP + H2O = GMP + L-glutamate + AMP + diphosphate + 2 H(+). It functions in the pathway purine metabolism; GMP biosynthesis; GMP from XMP (L-Gln route): step 1/1. Catalyzes the synthesis of GMP from XMP. In Pediococcus pentosaceus (strain ATCC 25745 / CCUG 21536 / LMG 10740 / 183-1w), this protein is GMP synthase [glutamine-hydrolyzing].